We begin with the raw amino-acid sequence, 332 residues long: Invasin IpaD (332 aa).

Residues 1–25 (MNITTLTNSISTSSFSPNNTNGSST) are compositionally biased toward low complexity. The tract at residues 1 to 43 (MNITTLTNSISTSSFSPNNTNGSSTETVNSDIKTTTSSHPVSS) is disordered. A compositionally biased stretch (polar residues) spans 26–43 (ETVNSDIKTTTSSHPVSS). Residues 44 to 77 (LTMLNDTLHNIRTTNQALKKELSQKTLTKTSLEE) adopt a coiled-coil conformation. The interval 192–267 (VNSLKKALEE…KSLDNLGGNG (76 aa)) is ipaB binding.

This sequence belongs to the invasin protein D family.

It localises to the secreted. Its function is as follows. Required for bacterial invasion of host cells. Controls IpaB and IpaC secretion, and the efficiency with which they are physically inserted into target cell membranes. These proteins are exported via T3SS to form a pore in the host membrane that allows the translocation of the other effectors into the host cytoplasm. Along with IpaB, is essential for both blocking secretion through the Mxi/Spa translocon in the absence of a secretion-inducing signal, and for controlling the level of secretion in the presence of this signal. This is Invasin IpaD (ipaD) from Shigella flexneri.